The following is a 35-amino-acid chain: Augerpeptide hheTx4 (35 aa).

Contains 4 disulfide bonds. As to expression, expressed by the venom duct.

It localises to the secreted. The protein is Augerpeptide hheTx4 of Hastula hectica (Sea snail).